Reading from the N-terminus, the 372-residue chain is MQIQAIELAHFRNYRGLQVDFMPGVNIFVGANGQGKTNLLESIALLSGGGSHRDARDAEMVQWQEAYYRIKAMGTADGQPVVIELAFGGERRKLAKVNNRRLRRIADLSETMNTVVFSPEDLSLVKGSPAQRRRYLDRELSQASPAYGDVLSRYARVLTQRNSLLRRLREGSATAAELELWDDQLAPLAVETLARRLDGLARIAPYARQIYRGLSRDKEQIELTYRSSFPLPDDRSRWLEAYRKALQERRAEEIARQATLTGPHRDDLQLFLNGRDARIYGSQGQQRSIALSLKLAEIAFIHQIKKEYPIVLLDDVMSELDPDRRQQLLSELESKNIQVFITTTHLHAFSPEQLGRAGIYRIQAGQLSRSNE.

Residue 30 to 37 (GANGQGKT) participates in ATP binding.

This sequence belongs to the RecF family.

The protein localises to the cytoplasm. Its function is as follows. The RecF protein is involved in DNA metabolism; it is required for DNA replication and normal SOS inducibility. RecF binds preferentially to single-stranded, linear DNA. It also seems to bind ATP. The protein is DNA replication and repair protein RecF of Heliobacterium modesticaldum (strain ATCC 51547 / Ice1).